Consider the following 143-residue polypeptide: MAIERTFSIIKPDAVAKNHIGAIYNRFETAGLKIIASKMIHLSKEQAEGFYAEHSERPFFGALVAFMTSGPIMVQTLEGENAVLAHREILGATNPAEAAEGTIRADFAESIDENAAHGSDSVASAEREVAYFFSAEELCPRTR.

Residues Lys-11, Phe-59, Arg-87, Thr-93, Arg-104, and Asn-114 each contribute to the ATP site. His-117 acts as the Pros-phosphohistidine intermediate in catalysis.

It belongs to the NDK family. As to quaternary structure, homotetramer. Mg(2+) is required as a cofactor.

It localises to the cytoplasm. The catalysed reaction is a 2'-deoxyribonucleoside 5'-diphosphate + ATP = a 2'-deoxyribonucleoside 5'-triphosphate + ADP. It catalyses the reaction a ribonucleoside 5'-diphosphate + ATP = a ribonucleoside 5'-triphosphate + ADP. Major role in the synthesis of nucleoside triphosphates other than ATP. The ATP gamma phosphate is transferred to the NDP beta phosphate via a ping-pong mechanism, using a phosphorylated active-site intermediate. The protein is Nucleoside diphosphate kinase of Shewanella pealeana (strain ATCC 700345 / ANG-SQ1).